We begin with the raw amino-acid sequence, 472 residues long: Na(+)/H(+) antiporter NhaA (472 aa).

A run of 10 helical transmembrane segments spans residues 24 to 44, 66 to 86, 108 to 128, 156 to 176, 196 to 216, 234 to 254, 290 to 310, 312 to 332, 361 to 381, and 392 to 412; these read ISGL…NLPA, LPIG…TVGL, LCAV…TALF, GWAV…ALFA, LLAI…YWFI, VPWI…FEAG, PFSA…VHFE, MSPL…LVVG, MIPA…IASL, and ARFG…VLLS. Positions 422-472 are disordered; that stretch reads AAAAAADEEDDESIDGDGIGQPSHTTEPTTPTEHPGTLADGTASVEIDFRH. The segment covering 427 to 436 has biased composition (acidic residues); the sequence is ADEEDDESID. A compositionally biased stretch (low complexity) spans 445 to 456; sequence HTTEPTTPTEHP.

This sequence belongs to the NhaA Na(+)/H(+) (TC 2.A.33) antiporter family.

Its subcellular location is the cell membrane. The enzyme catalyses Na(+)(in) + 2 H(+)(out) = Na(+)(out) + 2 H(+)(in). In terms of biological role, na(+)/H(+) antiporter that extrudes sodium in exchange for external protons. This Bifidobacterium longum (strain NCC 2705) protein is Na(+)/H(+) antiporter NhaA.